We begin with the raw amino-acid sequence, 88 residues long: uncharacterized protein (88 aa).

Positions 1 to 24 (MLPRSCKDFYETLRTAVLCGQACA) are cleaved as a signal peptide.

It to Rhizobium NGR234A y4oL.

This is an uncharacterized protein from Sinorhizobium fredii (strain NBRC 101917 / NGR234).